The following is an 83-amino-acid chain: Exodeoxyribonuclease 7 small subunit (83 aa).

The protein belongs to the XseB family. Heterooligomer composed of large and small subunits.

It is found in the cytoplasm. It carries out the reaction Exonucleolytic cleavage in either 5'- to 3'- or 3'- to 5'-direction to yield nucleoside 5'-phosphates.. Functionally, bidirectionally degrades single-stranded DNA into large acid-insoluble oligonucleotides, which are then degraded further into small acid-soluble oligonucleotides. The polypeptide is Exodeoxyribonuclease 7 small subunit (Heliobacterium modesticaldum (strain ATCC 51547 / Ice1)).